The following is a 310-amino-acid chain: Proline iminopeptidase (310 aa).

The 258-residue stretch at 33 to 290 (PVIFLHGGPG…RVVQAGHRAF (258 aa)) folds into the AB hydrolase-1 domain. Serine 107 serves as the catalytic Nucleophile. Residue aspartate 260 is part of the active site. The Proton donor role is filled by histidine 287.

Belongs to the peptidase S33 family.

The protein resides in the cytoplasm. The catalysed reaction is Release of N-terminal proline from a peptide.. In terms of biological role, specifically catalyzes the removal of N-terminal proline residues from peptides. This Neisseria meningitidis serogroup B (strain ATCC BAA-335 / MC58) protein is Proline iminopeptidase (pip).